We begin with the raw amino-acid sequence, 296 residues long: Ribosomal protein L11 methyltransferase (296 aa).

Positions 145, 166, 188, and 230 each coordinate S-adenosyl-L-methionine.

This sequence belongs to the methyltransferase superfamily. PrmA family.

It localises to the cytoplasm. The catalysed reaction is L-lysyl-[protein] + 3 S-adenosyl-L-methionine = N(6),N(6),N(6)-trimethyl-L-lysyl-[protein] + 3 S-adenosyl-L-homocysteine + 3 H(+). Functionally, methylates ribosomal protein L11. This Histophilus somni (strain 2336) (Haemophilus somnus) protein is Ribosomal protein L11 methyltransferase.